A 313-amino-acid polypeptide reads, in one-letter code: Ribosomal RNA small subunit methyltransferase H (313 aa).

S-adenosyl-L-methionine is bound by residues 35 to 37, Asp-55, Phe-79, Asp-101, and Gln-108; that span reads GGH.

It belongs to the methyltransferase superfamily. RsmH family.

It localises to the cytoplasm. It carries out the reaction cytidine(1402) in 16S rRNA + S-adenosyl-L-methionine = N(4)-methylcytidine(1402) in 16S rRNA + S-adenosyl-L-homocysteine + H(+). Functionally, specifically methylates the N4 position of cytidine in position 1402 (C1402) of 16S rRNA. This chain is Ribosomal RNA small subunit methyltransferase H, found in Klebsiella pneumoniae (strain 342).